Reading from the N-terminus, the 333-residue chain is Protein amalgam (333 aa).

The first 23 residues, Met1–Ser23, serve as a signal peptide directing secretion. Residues Pro25 to Thr128 enclose the Ig-like V-type domain. N-linked (GlcNAc...) asparagine glycosylation is found at Asn45 and Asn86. 3 disulfides stabilise this stretch: Cys46–Cys117, Cys161–Cys208, and Cys251–Cys307. Ig-like C2-type domains are found at residues Pro139–Arg223 and Pro230–Phe323. N-linked (GlcNAc...) asparagine glycosylation occurs at Asn308.

It is found in the cell membrane. This Drosophila melanogaster (Fruit fly) protein is Protein amalgam (Ama).